The following is a 536-amino-acid chain: MLRPLLLLWLWGRLGALTQGTPAGTAPTKDVVDLEFYTKRLFQSVSPSFLSITIDASLATDPRFLTFLGSPRLRALARGLSPAYLRFGGTKTDFLIFDPNKEPTSEERSYWQSQDNNDICGSERVSADVLRKLQMEWPFQELLLLREQYQREFKNSTYSRSSVDMLYSFAKCSRLDLIFGLNALLRTPDLRWNSSNAQLLLNYCSSKGYNISWELGNEPNSFWKKAHISIDGLQLGEDFVELHKLLQKSAFQNAKLYGPDIGQPRGKTVKLLRSFLKAGGEVIDSLTWHHYYLNGRVATKEDFLSSDVLDTFILSVQKILKVTKEMTPGKKVWLGETSSAYGGGAPLLSDTFAAGFMWLDKLGLSAQLGIEVVMRQVFFGAGNYHLVDENFEPLPDYWLSLLFKKLVGPKVLMSRVKGPDRSKLRVYLHCTNVYHPRYREGDLTLYVLNLHNVTKHLKLPPPMFSRPVDKYLLKPFGSDGLLSKSVQLNGQTLKMVDEQTLPALTEKPLPAGSSLSVPAFSYGFFVIRNAKIAACI.

The first 28 residues, 1–28, serve as a signal peptide directing secretion; the sequence is MLRPLLLLWLWGRLGALTQGTPAGTAPT. Heparan sulfate group is bound by residues 55–57 and Thr90; that span reads DAS. Positions 103–150 are cleaved as a propeptide — linker peptide; sequence PTSEERSYWQSQDNNDICGSERVSADVLRKLQMEWPFQELLLLREQYQ. Cysteines 120 and 172 form a disulfide. Heparan sulfate group is bound at residue 151–155; sequence REFKN. N-linked (GlcNAc...) asparagine glycosylation is found at Asn155, Asn193, and Asn210. Residue Glu218 is the Proton donor of the active site. Residues 263–273, His289, and Arg296 contribute to the heparan sulfate group site; that span reads QPRGKTVKLLR. A required for heterodimerization with the heparanase 8 kDa subunit region spans residues 281–410; it reads EVIDSLTWHH…LLFKKLVGPK (130 aa). The active-site Nucleophile is the Glu336. Residues 341-343 and 382-384 each bind heparan sulfate group; these read YGG and GNY. Cys430 and Cys535 are oxidised to a cystine. N-linked (GlcNAc...) asparagine glycosylation occurs at Asn452. A required for transferring proheparanase to the Golgi apparatus, secretion and subsequent enzyme activity and for enhancement of PKB/AKT1 phosphorylation region spans residues 520 to 536; the sequence is FSYGFFVIRNAKIAACI.

It belongs to the glycosyl hydrolase 79 family. As to quaternary structure, heterodimer; heterodimer formation between the 8 kDa and the 50 kDa subunits is required for enzyme activity. Interacts with TF; the interaction, inhibited by heparin, enhances the generation of activated factor X and activates coagulation. Interacts with HRG; the interaction is enhanced at acidic pH, partially inhibits binding of HPSE to cell surface receptors and modulates its enzymatic activity. Interacts with SDC1; the interaction enhances the shedding of SDC1. Interacts with HPSE2. Post-translationally, proteolytically processed. The cleavage of the 65 kDa form leads to the generation of a linker peptide, and the 8 kDa and 50 kDa products. The active form, the 8/50 kDa heterodimer, is resistant to degradation. Complete removal of the linker peptide appears to be a prerequisite to the complete activation of the enzyme. In terms of processing, N-glycosylated. Glycosylation of the 50 kDa subunit appears to be essential for its solubility.

It localises to the lysosome membrane. The protein localises to the secreted. It is found in the nucleus. It catalyses the reaction endohydrolysis of (1-&gt;4)-beta-D-glycosidic bonds of heparan sulfate chains in heparan sulfate proteoglycan.. Inhibited by laminarin sulfate and, to a lower extent, by heparin and sulfamin. Activated by calcium and magnesium. Inhibited by EDTA. Its function is as follows. Endoglycosidase that cleaves heparan sulfate proteoglycans (HSPGs) into heparan sulfate side chains and core proteoglycans. Participates in extracellular matrix (ECM) degradation and remodeling. Selectively cleaves the linkage between a glucuronic acid unit and an N-sulfo glucosamine unit carrying either a 3-O-sulfo or a 6-O-sulfo group. Can also cleave the linkage between a glucuronic acid unit and an N-sulfo glucosamine unit carrying a 2-O-sulfo group, but not linkages between a glucuronic acid unit and a 2-O-sulfated iduronic acid moiety. It is essentially inactive at neutral pH but becomes active under acidic conditions such as during tumor invasion and in inflammatory processes. Facilitates cell migration associated with metastasis, wound healing and inflammation. Enhances shedding of syndecans, and increases endothelial invasion and angiogenesis in myelomas. Acts as a procoagulant by increasing the generation of activation factor X in the presence of tissue factor and activation factor VII. Increases cell adhesion to the extracellular matrix (ECM), independent of its enzymatic activity. Induces AKT1/PKB phosphorylation via lipid rafts increasing cell mobility and invasion. Heparin increases this AKT1/PKB activation. Regulates osteogenesis. Enhances angiogenesis through up-regulation of SRC-mediated activation of VEGF. Implicated in hair follicle inner root sheath differentiation and hair homeostasis. The sequence is that of Heparanase (Hpse) from Rattus norvegicus (Rat).